Here is a 1469-residue protein sequence, read N- to C-terminus: Accumulation-associated protein (1469 aa).

The N-terminal stretch at 1 to 52 (MGKRRQGPINKKVDFLPNKLNKYSIRKFTVGTASILLGSTLIFGSSSHEAKA) is a signal peptide. 3 disordered regions span residues 52–164 (AAEE…SEPV), 486–511 (GIET…TPTT), and 528–1443 (EIKP…QANE). 2 stretches are compositionally biased toward polar residues: residues 75 to 94 (ENTN…STLQ) and 110 to 125 (KANS…SEAP). A compositionally biased stretch (basic and acidic residues) spans 129 to 144 (DLARKEDIPAVSKNEE). Over residues 145-164 (LQSSQPNTDSKIEPTTSEPV) the composition is skewed to polar residues. G5 domains lie at 446–528 (PKAV…GGEE), 574–656 (YGPV…GGEE), 702–784 (YGPV…GGEE), 830–912 (YGPV…GGEE), 958–1040 (YGPV…GGEE), 1086–1168 (YGPV…GGEQ), and 1211–1296 (VTKY…GPTK). Over residues 489-500 (TTTTPTYVNPNT) the composition is skewed to low complexity. 2 stretches are compositionally biased toward basic and acidic residues: residues 528 to 537 (EIKPGHKDEF) and 589 to 613 (PFDK…KGEP). Residues 614–629 (GTKTITTPTTKNPLTG) show a composition bias toward low complexity. Basic and acidic residues-rich tracts occupy residues 631-646 (KVGE…KQPV) and 655-665 (EEIKPGHKDEF). Residues 738 to 757 (KGEPGTKTITTPTTKNPLTG) are compositionally biased toward low complexity. 2 stretches are compositionally biased toward basic and acidic residues: residues 759–793 (KVGE…KDEF) and 845–869 (PFDK…KGEP). Residues 870 to 885 (GTKTITTPTTKNPLTG) show a composition bias toward low complexity. Over residues 887–921 (KVGEGEPTEKVTKQPVDEIVHYGGEEIKPGHKDEF) the composition is skewed to basic and acidic residues. The span at 994–1013 (KGEPGTKTITTPTTKNPLTG) shows a compositional bias: low complexity. Residues 1015–1049 (KVGEGEPTEKITKQPVDEIVHYGGEEIKPGHKDEF) show a composition bias toward basic and acidic residues. Over residues 1122-1141 (KGEPGTKTITTPTTKNPLTG) the composition is skewed to low complexity. Basic and acidic residues-rich tracts occupy residues 1143–1162 (KVGE…DEIV), 1229–1253 (PFDK…KGEP), and 1271–1286 (KVGE…KQPV). A compositionally biased stretch (polar residues) spans 1409–1443 (TPTQSGAPEQPNRSMHSTDNKNQLPDTGENRQANE). Positions 1432 to 1436 (LPDTG) match the LPXTG sorting signal motif. Position 1435 is a pentaglycyl murein peptidoglycan amidated threonine (Thr-1435). The propeptide at 1436-1469 (GENRQANEGTLVGSLLAIVGSLFIFGRRKKGNEK) is removed by sortase.

The protein resides in the secreted. It localises to the cell wall. The chain is Accumulation-associated protein from Staphylococcus epidermidis (strain ATCC 12228 / FDA PCI 1200).